A 606-amino-acid chain; its full sequence is Probable glutamine--fructose-6-phosphate aminotransferase [isomerizing] (606 aa).

Catalysis depends on cysteine 2, which acts as the For GATase activity. Residues 2-224 enclose the Glutamine amidotransferase type-2 domain; the sequence is CGISACLNHT…DNDYGYITNN (223 aa). SIS domains follow at residues 282–427 and 458–596; these read FFPE…SLDN and LLEF…PDYP.

The enzyme catalyses D-fructose 6-phosphate + L-glutamine = D-glucosamine 6-phosphate + L-glutamate. The protein operates within nucleotide-sugar biosynthesis; UDP-N-acetyl-alpha-D-glucosamine biosynthesis; alpha-D-glucosamine 6-phosphate from D-fructose 6-phosphate: step 1/1. Its function is as follows. Controls the flux of glucose into the hexosamine pathway. Most likely involved in regulating the availability of precursors for glycosylation of proteins (Potential). This Acanthamoeba polyphaga (Amoeba) protein is Probable glutamine--fructose-6-phosphate aminotransferase [isomerizing].